The chain runs to 64 residues: Anti-sigma-G factor Gin (64 aa).

Positions 11, 14, 30, and 33 each coordinate Zn(2+).

As to quaternary structure, probably functions as a homodimer. Interacts with sigma-G factor, recognition occurs via the first 71 residues of sigma-G. Zn(2+) is required as a cofactor.

An anti-sigma-G factor, prevents premature activation of sigma-G factor in the forespore; overexpression leads to 1000-fold reduction in spore formation, spore formation stops after engulfment. Overexpression also inhibits sigma-G transcription activation activity. When both Gin and sigma-G are expressed in E.coli Gin inhibits sigma-G, strongly suggesting Gin inhibits by direct physical interaction. This is Anti-sigma-G factor Gin from Bacillus subtilis (strain 168).